The chain runs to 269 residues: Glutamate racemase (269 aa).

Substrate-binding positions include 14 to 15 (DS) and 46 to 47 (YS). Cys-78 acts as the Proton donor/acceptor in catalysis. 79-80 (NT) contacts substrate. Cys-189 (proton donor/acceptor) is an active-site residue. Residue 190–191 (TH) participates in substrate binding.

Belongs to the aspartate/glutamate racemases family.

The enzyme catalyses L-glutamate = D-glutamate. It functions in the pathway cell wall biogenesis; peptidoglycan biosynthesis. Its function is as follows. Provides the (R)-glutamate required for cell wall biosynthesis. The polypeptide is Glutamate racemase (Haemophilus influenzae (strain PittGG)).